The following is a 492-amino-acid chain: Fumarate hydratase 1, mitochondrial (492 aa).

The N-terminal 28 residues, 1–28, are a transit peptide targeting the mitochondrion; that stretch reads MSIYVASRRLSGGTTVTALRYATSLRSY. Substrate is bound by residues 127–129, 157–160, 167–169, and T215; these read SGT, HPND, and SSN. H216 functions as the Proton donor/acceptor in the catalytic mechanism. S346 is an active-site residue. Residues S347 and 352 to 354 each bind substrate; that span reads KVN.

The protein belongs to the class-II fumarase/aspartase family. Fumarase subfamily. As to quaternary structure, homotetramer.

It is found in the mitochondrion. It carries out the reaction (S)-malate = fumarate + H2O. Its pathway is carbohydrate metabolism; tricarboxylic acid cycle; (S)-malate from fumarate: step 1/1. With respect to regulation, fumarate hydratase activity (fumarate to L-malate) is strongly inhibited by phosphoenolpyruvate, citrate, oxaloacetate, ATP and ADP. Malate dehydratase activity (malate to fumarate) is activated by oxaloacetate, pyruvate, Asn and Gln. Malate dehydratase activity (malate to fumarate) is inhibited by citrate, succinate, ADP, ATP, glucose-6P and phosphoenolpyruvate. Catalyzes the reversible stereospecific interconversion of fumarate to L-malate. Catalyzes the hydration of fumarate to L-malate in the tricarboxylic acid (TCA) cycle to facilitate a transition step in the production of energy in the form of NADH. The polypeptide is Fumarate hydratase 1, mitochondrial (Arabidopsis thaliana (Mouse-ear cress)).